Reading from the N-terminus, the 978-residue chain is Mineralocorticoid receptor (978 aa).

The segment at 1–602 (METKGYHSLP…STGSSRPSKI (602 aa)) is modulating. Residues 234–243 (SLTCSPSVEN) are compositionally biased toward polar residues. Disordered regions lie at residues 234–331 (SLTC…STVG) and 353–372 (GAIQ…AHDV). Residues Ser250, Ser259, Ser283, Ser287, and Ser299 each carry the phosphoserine modification. Over residues 259–300 (SPLSSPLSSMKSPISSPPSHCSVKSPVSSPNNVPLRSSVSSP) the composition is skewed to low complexity. Over residues 301–331 (ANLNNSRCSVSSPSNTNNRSTLSSPTASTVG) the composition is skewed to polar residues. Zn(2+) is bound by residues Cys603, Cys606, Cys620, Cys623, Cys637, Cys643, Cys653, and Cys656. 2 consecutive NR C4-type zinc fingers follow at residues 603–623 (CLVC…CGSC) and 637–661 (CAGR…LQKC). The nuclear receptor DNA-binding region spans 603-666 (CLVCGDEASG…RLQKCLQAGM (64 aa)). The interval 667–719 (NLGARKSKKLGKLKGLHEEQPQQPPPPPPQSPEEGTTYIAPTKEPSVNSALVP) is hinge. Positions 681–706 (GLHEEQPQQPPPPPPQSPEEGTTYIA) are disordered. Residues 688 to 697 (QQPPPPPPQS) are compositionally biased toward pro residues. Residues 720–958 (QLASITRALT…EFPAMLVEII (239 aa)) enclose the NR LBD domain. Positions 764 and 770 each coordinate 21-hydroxyprogesterone. Aldosterone contacts are provided by Asn764 and Gln770. 2 residues coordinate progesterone: Asn764 and Gln770. The interval 776–779 (KWAK) is important for coactivator binding. 2 residues coordinate 21-hydroxyprogesterone: Arg811 and Thr939. Residues Arg811 and Thr939 each coordinate aldosterone. Positions 811 and 939 each coordinate progesterone.

This sequence belongs to the nuclear hormone receptor family. NR3 subfamily. As to quaternary structure, heteromultimeric cytoplasmic complex with HSP90, HSP70, and FKBP4, in the absence of ligand. After ligand binding, it translocates to the nucleus and binds to DNA as a homodimer and as a heterodimer with NR3C1. Binds the coactivator NCOA2. May interact with HSD11B2 in the absence of ligand. Binds the coactivators NCOA1, TIF1 and NRIP1. Phosphorylated. As to expression, expressed in heart and kidney.

Its subcellular location is the cytoplasm. It localises to the nucleus. It is found in the endoplasmic reticulum membrane. Its function is as follows. Receptor for both mineralocorticoids (MC) such as aldosterone and glucocorticoids (GC) such as corticosterone or cortisol. Binds to mineralocorticoid response elements (MRE) and transactivates target genes. The effect of MC is to increase ion and water transport and thus raise extracellular fluid volume and blood pressure and lower potassium levels. The chain is Mineralocorticoid receptor (Nr3c2) from Mus musculus (Mouse).